A 199-amino-acid chain; its full sequence is Ribonuclease HII (199 aa).

An RNase H type-2 domain is found at Asp-12 to Gly-199. Residues Asp-18, Glu-19, and Asp-110 each coordinate a divalent metal cation.

Belongs to the RNase HII family. The cofactor is Mn(2+). It depends on Mg(2+) as a cofactor.

The protein resides in the cytoplasm. The enzyme catalyses Endonucleolytic cleavage to 5'-phosphomonoester.. Functionally, endonuclease that specifically degrades the RNA of RNA-DNA hybrids. This chain is Ribonuclease HII, found in Marinomonas sp. (strain MWYL1).